The sequence spans 547 residues: uncharacterized protein (547 aa).

The interval 1 to 37 is disordered; that stretch reads MSAASSAIPKRSDPRLLDQKKSAKSTLPKNTPENGVS. Positions 10–21 are enriched in basic and acidic residues; the sequence is KRSDPRLLDQKK. The span at 24–37 shows a compositional bias: polar residues; the sequence is KSTLPKNTPENGVS. 2 consecutive C3H1-type zinc fingers follow at residues 41–67 and 68–95; these read NLQH…SHSL and ETER…HALP. The segment at 132–176 is disordered; it reads SPSLSSKTMKNPADKANNTTATDVRGNTATSPYFPFSRSPGRHSG. Polar residues predominate over residues 147 to 162; it reads ANNTTATDVRGNTATS. Ser-343 is subject to Phosphoserine. A Phosphotyrosine modification is found at Tyr-344. Phosphoserine is present on residues Ser-353, Ser-355, Ser-483, Ser-489, Ser-495, and Ser-499. Residue Thr-502 is modified to Phosphothreonine. Residues 526 to 536 are compositionally biased toward polar residues; it reads VANSSPPWNST. The tract at residues 526–547 is disordered; that stretch reads VANSSPPWNSTVEEETPFQMDD. A compositionally biased stretch (acidic residues) spans 537–547; the sequence is VEEETPFQMDD.

This is an uncharacterized protein from Schizosaccharomyces pombe (strain 972 / ATCC 24843) (Fission yeast).